The chain runs to 72 residues: Translation initiation factor IF-1 (72 aa).

In terms of domain architecture, S1-like spans 1 to 72; that stretch reads MTKEDSFEMH…SKGRIIFRSR (72 aa).

Belongs to the IF-1 family. Component of the 30S ribosomal translation pre-initiation complex which assembles on the 30S ribosome in the order IF-2 and IF-3, IF-1 and N-formylmethionyl-tRNA(fMet); mRNA recruitment can occur at any time during PIC assembly.

The protein resides in the cytoplasm. One of the essential components for the initiation of protein synthesis. Stabilizes the binding of IF-2 and IF-3 on the 30S subunit to which N-formylmethionyl-tRNA(fMet) subsequently binds. Helps modulate mRNA selection, yielding the 30S pre-initiation complex (PIC). Upon addition of the 50S ribosomal subunit IF-1, IF-2 and IF-3 are released leaving the mature 70S translation initiation complex. The sequence is that of Translation initiation factor IF-1 from Blochmanniella pennsylvanica (strain BPEN).